Consider the following 381-residue polypeptide: uncharacterized protein (381 aa).

The span at 331 to 340 shows a compositional bias: polar residues; that stretch reads MQNGYANNGR. Positions 331 to 381 are disordered; it reads MQNGYANNGRNHQRERFERPEKNSKKNKFLPFNGSNKEKKRDKLKKNCVIM. A compositionally biased stretch (basic and acidic residues) spans 342-354; it reads HQRERFERPEKNS. Positions 372-381 are enriched in basic residues; that stretch reads DKLKKNCVIM.

The protein localises to the cytoplasm. It localises to the nucleus. This is an uncharacterized protein from Saccharomyces cerevisiae (strain ATCC 204508 / S288c) (Baker's yeast).